We begin with the raw amino-acid sequence, 68 residues long: Protein SlyX homolog (68 aa).

The protein belongs to the SlyX family.

This Brucella suis (strain ATCC 23445 / NCTC 10510) protein is Protein SlyX homolog.